Consider the following 270-residue polypeptide: Putative phosphatase YxeH (270 aa).

Aspartate 8 functions as the Nucleophile in the catalytic mechanism. Position 8 (aspartate 8) interacts with Mg(2+). A phosphate-binding site is contributed by methionine 9. Residue aspartate 10 coordinates Mg(2+). Phosphate contacts are provided by residues threonine 42–glycine 43 and lysine 196. Aspartate 219 is a binding site for Mg(2+). Asparagine 222 provides a ligand contact to phosphate.

This sequence belongs to the HAD-like hydrolase superfamily. Cof family. The cofactor is Mg(2+).

The polypeptide is Putative phosphatase YxeH (yxeH) (Bacillus subtilis (strain 168)).